We begin with the raw amino-acid sequence, 400 residues long: Bifunctional enzyme IspD/IspF (400 aa).

The tract at residues 1–235 is 2-C-methyl-D-erythritol 4-phosphate cytidylyltransferase; sequence MSLWTVLLAA…LAEAAAPPVP (235 aa). The segment at 236–400 is 2-C-methyl-D-erythritol 2,4-cyclodiphosphate synthase; it reads VTGYGYDVHR…VALVSGWRRP (165 aa). Positions 242 and 244 each coordinate a divalent metal cation. 4-CDP-2-C-methyl-D-erythritol 2-phosphate-binding positions include 242 to 244 and 276 to 277; these read DVH and HS. His-284 is an a divalent metal cation binding site. 4-CDP-2-C-methyl-D-erythritol 2-phosphate is bound by residues 298–300, 303–307, 374–377, and Phe-381; these read DIG, FPDSN, and TTEE.

This sequence in the N-terminal section; belongs to the IspD/TarI cytidylyltransferase family. IspD subfamily. In the C-terminal section; belongs to the IspF family. A divalent metal cation is required as a cofactor.

It carries out the reaction 2-C-methyl-D-erythritol 4-phosphate + CTP + H(+) = 4-CDP-2-C-methyl-D-erythritol + diphosphate. The catalysed reaction is 4-CDP-2-C-methyl-D-erythritol 2-phosphate = 2-C-methyl-D-erythritol 2,4-cyclic diphosphate + CMP. It participates in isoprenoid biosynthesis; isopentenyl diphosphate biosynthesis via DXP pathway; isopentenyl diphosphate from 1-deoxy-D-xylulose 5-phosphate: step 2/6. Its pathway is isoprenoid biosynthesis; isopentenyl diphosphate biosynthesis via DXP pathway; isopentenyl diphosphate from 1-deoxy-D-xylulose 5-phosphate: step 4/6. Bifunctional enzyme that catalyzes the formation of 4-diphosphocytidyl-2-C-methyl-D-erythritol from CTP and 2-C-methyl-D-erythritol 4-phosphate (MEP) (IspD), and catalyzes the conversion of 4-diphosphocytidyl-2-C-methyl-D-erythritol 2-phosphate (CDP-ME2P) to 2-C-methyl-D-erythritol 2,4-cyclodiphosphate (ME-CPP) with a corresponding release of cytidine 5-monophosphate (CMP) (IspF). The protein is Bifunctional enzyme IspD/IspF of Solidesulfovibrio magneticus (strain ATCC 700980 / DSM 13731 / RS-1) (Desulfovibrio magneticus).